A 527-amino-acid polypeptide reads, in one-letter code: Nucleobase-ascorbate transporter LPE1 (527 aa).

The next 12 helical transmembrane spans lie at 43–63 (LVMLGTTVLIATIIVPLMGGG), 68–88 (AIVIQTILFLSGINTLLQVHF), 92–112 (LPAVMSGSYTYIYPAVAIILS), 132–152 (LQGALIIAGVFQAVVGFFGIW), 163–183 (AAVPFVTLTGLGLFFFAFPGV), 189–209 (VGLPALVLLVIFAEYASHLFA), 219–239 (AVLVTVVIIWIYAEILTAAGA), 284–304 (FAMLAASFASLIESTGTLIAV), 361–383 (VIKISALFMIFFSLFAKFGAVLA), 387–409 (LPIFAALYCVLFAYSAGAGFSLL), 427–447 (LFLGLSIPQYFRVYEMFFGFG), and 458–478 (VMVNVIFSSPATVAAILAYLL).

The protein belongs to the nucleobase:cation symporter-2 (NCS2) (TC 2.A.40) family. In terms of tissue distribution, highly expressed in roots.

Its subcellular location is the membrane. Its activity is regulated as follows. Inhibited by excess of xanthin, uric acid and ascorbic acid, and by 100 um N,N-dicyclohexylcarbodiimide and 30 um carbonyl cyanide m-chlorophenyl-hydrazone. High affinity uric acid-xanthine transporter in A.nidulans. Binds, but cannot transport ascorbic acid. The polypeptide is Nucleobase-ascorbate transporter LPE1 (LPE1) (Zea mays (Maize)).